A 142-amino-acid chain; its full sequence is Aspartate 1-decarboxylase (142 aa).

S25 functions as the Schiff-base intermediate with substrate; via pyruvic acid in the catalytic mechanism. At S25 the chain carries Pyruvic acid (Ser). T57 is a binding site for substrate. Y58 serves as the catalytic Proton donor. 73–75 lines the substrate pocket; the sequence is GAA.

Belongs to the PanD family. Heterooctamer of four alpha and four beta subunits. Requires pyruvate as cofactor. Post-translationally, is synthesized initially as an inactive proenzyme, which is activated by self-cleavage at a specific serine bond to produce a beta-subunit with a hydroxyl group at its C-terminus and an alpha-subunit with a pyruvoyl group at its N-terminus.

It is found in the cytoplasm. The enzyme catalyses L-aspartate + H(+) = beta-alanine + CO2. Its pathway is cofactor biosynthesis; (R)-pantothenate biosynthesis; beta-alanine from L-aspartate: step 1/1. Catalyzes the pyruvoyl-dependent decarboxylation of aspartate to produce beta-alanine. This Mycobacterium leprae (strain Br4923) protein is Aspartate 1-decarboxylase.